Reading from the N-terminus, the 319-residue chain is Probable cytochrome c oxidase subunit 2 (319 aa).

Positions 1 to 33 are cleaved as a signal peptide; that stretch reads MSPNGSDRSPRRPMRRKLLQALTAGLVLATATG. 2 consecutive transmembrane segments (helical) span residues 63–83 and 101–121; these read WAAALATGVLVWGLILWATIF and MPIEALYTVVPLIIVSVLFYF. Cu cation is bound by residues H227, C262, C266, and H270.

Belongs to the cytochrome c oxidase subunit 2 family. The cofactor is Cu cation. It depends on heme as a cofactor.

It localises to the cell membrane. The enzyme catalyses 4 Fe(II)-[cytochrome c] + O2 + 8 H(+)(in) = 4 Fe(III)-[cytochrome c] + 2 H2O + 4 H(+)(out). Its function is as follows. Subunits I and II form the functional core of the enzyme complex. Electrons originating in cytochrome c are transferred via heme a and Cu(A) to the binuclear center formed by heme a3 and Cu(B). The polypeptide is Probable cytochrome c oxidase subunit 2 (ctaC) (Streptomyces avermitilis (strain ATCC 31267 / DSM 46492 / JCM 5070 / NBRC 14893 / NCIMB 12804 / NRRL 8165 / MA-4680)).